A 463-amino-acid chain; its full sequence is MTTETRSLYSQLPAIDRLLRDSSFLSLRDTYGHTRVVELLRQMLDEAREVIRDSQTLPAWCENWAQEVDARLTKEAQSALRPVINLTGTVLHTNLGRALQAEAAVEAVAQAMRSPVTLEYDLDDAGRGHRDRALAQLLCRITGAEDACIVNNNAAAVLLMLAATASGKEVVVSRGELVEIGGAFRIPDVMRQAGCTLHEVGTTNRTHANDYRQAVNENTALLMKVHTSNYSIQGFTKAIDEAELVALGKELDIPVVTDLGSGSLVDLSQYGLPKEPMPQELIAAGVSLVSFSGDKLLGGPQAGIIVGKKEMIARLQSHPLKRALRADKMTLAALEATVRLYLHPEALSEKLPTLRLLTRSAEVIQIQAQRLQAPLAAHYGAEFAVQVMPCLSQIGSGSLPVDRLPSAALTFTPHDGRGSHLESLAARWRELPVPVIGRIYDGRLWLDLRCLEDEQRFLEMLLK.

Lys-295 carries the post-translational modification N6-(pyridoxal phosphate)lysine.

The protein belongs to the SelA family. In terms of assembly, homodecamer; pentamer of dimers. Binds only one seryl-tRNA(Sec) per dimer. The cofactor is pyridoxal 5'-phosphate.

Its subcellular location is the cytoplasm. The catalysed reaction is L-seryl-tRNA(Sec) + selenophosphate + H(+) = L-selenocysteinyl-tRNA(Sec) + phosphate. It functions in the pathway aminoacyl-tRNA biosynthesis; selenocysteinyl-tRNA(Sec) biosynthesis; selenocysteinyl-tRNA(Sec) from L-seryl-tRNA(Sec) (bacterial route): step 1/1. Converts seryl-tRNA(Sec) to selenocysteinyl-tRNA(Sec) required for selenoprotein biosynthesis. This chain is L-seryl-tRNA(Sec) selenium transferase, found in Escherichia coli O17:K52:H18 (strain UMN026 / ExPEC).